The following is a 505-amino-acid chain: Keratin, type II cuticular Hb1 (505 aa).

The segment at 1 to 106 (MTCGSGFGGR…PNAQCVKQEE (106 aa)) is head. One can recognise an IF rod domain in the interval 106–417 (EKEQIKSLNS…RLLEGEEQRL (312 aa)). Positions 107-141 (KEQIKSLNSRFAAFIDKVRFLEQQNKLLETKLQFY) are coil 1A. Residues 142 to 151 (QNRECCQSNL) are linker 1. Residues 152–252 (EPLFEGYIET…YEEEILILQS (101 aa)) form a coil 1B region. Lys212 participates in a covalent cross-link: Glycyl lysine isopeptide (Lys-Gly) (interchain with G-Cter in SUMO1). A linker 12 region spans residues 253–269 (HISDTSVVVKLDNSRDL). Residues 270 to 413 (NMDCIIAEIK…ATYRRLLEGE (144 aa)) are coil 2. Residues 414-505 (EQRLCEGIGA…GSCGSSCRKC (92 aa)) are tail.

The protein belongs to the intermediate filament family. As to quaternary structure, heterotetramer of two type I and two type II keratins. As to expression, abundantly expressed in the differentiating cortex of growing (anagen) hair. Expression is restricted to the keratinocytes of the hair cortex and is absent from inner root sheath and medulla. Expressed in malignant lymph node tissue in breast carcinoma tissue.

The protein is Keratin, type II cuticular Hb1 (KRT81) of Homo sapiens (Human).